The chain runs to 136 residues: Histone H3.2 (136 aa).

The disordered stretch occupies residues 1 to 43 (MARTKQTARKSTGGKAPRKQLATKAARKSAPATGGVKKPHRFR). Residue lysine 5 is modified to N6-methylated lysine. Lysine 10 is subject to N6-acetyllysine; alternate. At lysine 10 the chain carries N6-methylated lysine; alternate. Residue serine 11 is modified to Phosphoserine. At threonine 12 the chain carries Phosphothreonine. Position 15 is an N6-acetyllysine (lysine 15). An N6-acetyllysine; alternate mark is found at lysine 19 and lysine 24. N6-methylated lysine; alternate occurs at positions 19 and 24. Position 28 is an N6-methylated lysine (lysine 28). The residue at position 29 (serine 29) is a Phosphoserine. Position 37 is an N6-methylated lysine (lysine 37).

The protein belongs to the histone H3 family. In terms of assembly, the nucleosome is a histone octamer containing two molecules each of H2A, H2B, H3 and H4 assembled in one H3-H4 heterotetramer and two H2A-H2B heterodimers. The octamer wraps approximately 147 bp of DNA. In terms of processing, acetylation is generally linked to gene activation. Can be acetylated to form H3K9ac, H3K14ac, H3K18ac and H3K23ac. H3K9ac could compete with H3K9me and prevent gene silencing. H3K9ac is restricted to euchromatin. Post-translationally, methylated to form mainly H3K4me, H3K9me, H3K18me, H3K23me, H3K27me and H3K36me. H3K4me1/2/3, H3K9me3, H3K27me3 and H3K36me1/2/3 are typical marks for euchromatin, whereas heterochromatic chromocenters are enriched in H3K9me1/2 and H3K27me1/2. H2BK143ub1 is probably prerequisite for H3K4me. Can be phosphorylated to form H3S10ph, H3T11ph and H3S28ph. In terms of tissue distribution, expressed in bicellular pollen, root tips, shoot apices, young leaves and ovules.

It localises to the nucleus. Its subcellular location is the nucleolus. It is found in the chromosome. Its function is as follows. Core component of nucleosome. Nucleosomes wrap and compact DNA into chromatin, limiting DNA accessibility to the cellular machineries which require DNA as a template. Histones thereby play a central role in transcription regulation, DNA repair, DNA replication and chromosomal stability. DNA accessibility is regulated via a complex set of post-translational modifications of histones, also called histone code, and nucleosome remodeling. The chain is Histone H3.2 (YAH3) from Lilium longiflorum (Trumpet lily).